Consider the following 598-residue polypeptide: MALTIETDVLVVGTGPAGASAGALLARYGVRTMLINKYNWTAPTPRAHITNQRTMEILRDLGLEAEARLYAAPNDLMGENTICASLAGEEFGRIRTWGTDVRRRADYDECSPTSMCDLPQNYLEPILVKSAALDGCKVRFDTEYLGHEQDADGVSSRLRDRLNGEEFTVRSKYLIGADGANSRVVSDLDLPLEGTMGKSGSINLLFEADLDRYVAHRPSVLYWVIQPGSDIGGLGIGVVRMVRPWNKWLAIWGYDVEQGPPEISESFARRIVHNLIGDDSVPLKIEGISTWTVNDMYATRLQQGRVFCAGDAVHRHPPTNGLGSNTSIQDSFNLAWKIAMVLNGTADESLLDTYTIERAPIAKQVVCRANKSLEDFPPIAMALGLPQAKSADEMKSNMARRKEPGPEAQAQRTRLREAIAGTNYVYNAHGVEMNQRYDSPAIVADNSPDEVFRDVELYHQASTRPGAPMPHVWVYASGDGHRISTKDLCGKGNFTLFTGIGGAAWQDAAAAVSRQLGVAVTVRIIGPGQAYEDHYGDFARISEIIDTGAILVRPDFHVAYRATSLPADAAGDLVSAMRRILGRQSERSSALRVTSRAI.

FAD-binding positions include 8-37 (DVLV…LINK) and 301-311 (LQQGRVFCAGD).

It belongs to the PheA/TfdB FAD monooxygenase family. As to quaternary structure, homotetramer. The cofactor is FAD.

The enzyme catalyses 2,4-dichlorophenol + NADPH + O2 + H(+) = 3,5-dichlorocatechol + NADP(+) + H2O. The protein operates within xenobiotic degradation; (2,4-dichlorophenoxy)acetate degradation. Functionally, transforms 2,4-dichlorophenol (2,4-DCP) into 3,5-dichlorocatechol. The protein is 2,4-dichlorophenol 6-monooxygenase (tfdB) of Cupriavidus pinatubonensis (strain JMP 134 / LMG 1197) (Cupriavidus necator (strain JMP 134)).